The chain runs to 355 residues: S-adenosylmethionine:tRNA ribosyltransferase-isomerase (355 aa).

Belongs to the QueA family. In terms of assembly, monomer.

The protein localises to the cytoplasm. It carries out the reaction 7-aminomethyl-7-carbaguanosine(34) in tRNA + S-adenosyl-L-methionine = epoxyqueuosine(34) in tRNA + adenine + L-methionine + 2 H(+). It participates in tRNA modification; tRNA-queuosine biosynthesis. Transfers and isomerizes the ribose moiety from AdoMet to the 7-aminomethyl group of 7-deazaguanine (preQ1-tRNA) to give epoxyqueuosine (oQ-tRNA). This is S-adenosylmethionine:tRNA ribosyltransferase-isomerase from Aeromonas hydrophila subsp. hydrophila (strain ATCC 7966 / DSM 30187 / BCRC 13018 / CCUG 14551 / JCM 1027 / KCTC 2358 / NCIMB 9240 / NCTC 8049).